We begin with the raw amino-acid sequence, 219 residues long: Glutathione S-transferase-like protein LUC7 (219 aa).

The GST N-terminal domain maps to Pro-3–Glu-84. The 130-residue stretch at Asp-90–Glu-219 folds into the GST C-terminal domain.

Belongs to the GST superfamily.

Functionally, glutathione S-transferase-like protein; part of the gene cluster that mediates the biosynthesis of the mycotoxin lucilactaene and the lucilactaene-related compound NG-391 that act as cell cycle inhibitors with potent growth inhibitory activity against malarial parasites, moderate growth inhibitory activity against cancer cells, and no activity against bacteria and fungi. Within the cluster, LUC7 and LUC8 encode proteins which are not commonly involved in the biosynthesis of secondary metabolites and are not essential for lucilactaene biosynthesis. This is Glutathione S-transferase-like protein LUC7 from Fusarium sp.